Here is a 2297-residue protein sequence, read N- to C-terminus: Serine/threonine-protein kinase WNK2 (2297 aa).

A compositionally biased stretch (basic and acidic residues) spans 1-10 (MDGDGGRRDV). Disordered regions lie at residues 1–75 (MDGD…QRRV) and 89–183 (ARGR…EDDL). Residues arginine 19 and arginine 30 each carry the omega-N-methylarginine modification. Residue serine 45 is modified to Phosphoserine. Residues 92 to 120 (RPAAPAPAALVAQPGAPGAPADAGPEPVG) show a composition bias toward low complexity. Residues 142-172 (GPREEAAATVRKEDEGAAEAKPEPGRTRRDE) are compositionally biased toward basic and acidic residues. A compositionally biased stretch (acidic residues) spans 173–182 (PEEEEDDEDD). A Protein kinase domain is found at 195–453 (LKFDIELGRG…IKDLLSHAFF (259 aa)). ATP is bound by residues serine 205, 275 to 278 (TELM), and lysine 325. Aspartate 342 serves as the catalytic Proton acceptor. Phosphoserine; by autocatalysis is present on residues serine 352 and serine 356. Serine 560 is modified (phosphoserine). Disordered regions lie at residues 579-630 (AQAG…DSQS), 699-751 (FPDP…PVVP), 917-1022 (PQMA…PGSQ), 1117-1185 (PVQE…ERAS), 1262-1297 (SEDT…SQAN), 1323-1345 (APEA…ASQG), 1374-1480 (SAQS…HEAP), and 1492-1586 (PCTP…DSTI). Over residues 604 to 625 (PTSATSLASDSTFDSGQGSTVY) the composition is skewed to polar residues. Pro residues-rich tracts occupy residues 709–740 (VLPP…PTPL) and 939–1007 (PPQP…PLQP). A Phosphoserine modification is found at serine 1150. A compositionally biased stretch (basic residues) spans 1167–1178 (ARKHHRRSTRAR). The residue at position 1262 (serine 1262) is a Phosphoserine. Positions 1392-1406 (SKEQPSFLASQQLLS) are enriched in polar residues. Over residues 1411–1426 (SNPPGAPPAPLAPSSP) the composition is skewed to pro residues. Polar residues-rich tracts occupy residues 1439–1453 (ATST…TASQ) and 1461–1473 (QGLT…SQPL). Over residues 1510-1520 (EPLPPPAPEPS) the composition is skewed to pro residues. Positions 1526–1544 (PQPALGQPAPLLPAAVGAV) are enriched in low complexity. Residues 1552 to 1565 (PSPPLGPTVPPQPP) show a composition bias toward pro residues. The residue at position 1588 (serine 1588) is a Phosphoserine. Residues 1621 to 1631 (TLEPLRGDQPR) show a composition bias toward basic and acidic residues. The tract at residues 1621-1865 (TLEPLRGDQP…PVQKQASLPV (245 aa)) is disordered. Residues 1675 to 1688 (QGTSSSMTAESSPR) show a composition bias toward polar residues. A Phosphoserine modification is found at serine 1685. A compositionally biased stretch (basic and acidic residues) spans 1721–1731 (ARVEPTDRDGG). Residues serine 1736, serine 1817, serine 1818, serine 1862, and serine 1889 each carry the phosphoserine modification. Disordered regions lie at residues 1970–1990 (NVGF…SKSK) and 2011–2031 (TGHL…QASV). The span at 1981-1990 (GRRRKTSKSK) shows a compositional bias: basic residues. Serine 2067 carries the post-translational modification Phosphoserine. 2 disordered regions span residues 2123–2142 (SRSS…QPAL) and 2269–2297 (CCGH…PVRS). Residues 2272 to 2289 (HSTQPRGGQRVGSKTASF) show a composition bias toward polar residues.

Belongs to the protein kinase superfamily. Ser/Thr protein kinase family. WNK subfamily. As to quaternary structure, forms a complex with the phosphorylated form of STK39. Mg(2+) is required as a cofactor. Post-translationally, autophosphorylated. Autophosphorylation at Ser-352 and Ser-356 promotes its activity. As to expression, expressed in various cancer cell lines (at protein level). Predominantly expressed in heart, brain, skeletal muscle and colon.

It localises to the cytoplasm. Its subcellular location is the cell membrane. The catalysed reaction is L-seryl-[protein] + ATP = O-phospho-L-seryl-[protein] + ADP + H(+). The enzyme catalyses L-threonyl-[protein] + ATP = O-phospho-L-threonyl-[protein] + ADP + H(+). Activation requires autophosphorylation of Ser-356 and, to a lower extent, Ser-352. Functionally, serine/threonine-protein kinase component of the WNK2-SPAK/OSR1 kinase cascade, which plays an important role in the regulation of electrolyte homeostasis, cell signaling, survival, and proliferation. The WNK2-SPAK/OSR1 kinase cascade is composed of WNK2, which mediates phosphorylation and activation of downstream kinases OXSR1/OSR1 and STK39/SPAK. Following activation, OXSR1/OSR1 and STK39/SPAK catalyze phosphorylation of ion cotransporters, regulating their activity. Acts as an activator and inhibitor of sodium-coupled chloride cotransporters and potassium-coupled chloride cotransporters respectively. Activates SLC12A2, SCNN1A, SCNN1B, SCNN1D and SGK1 and inhibits SLC12A5. Negatively regulates the EGF-induced activation of the ERK/MAPK-pathway and the downstream cell cycle progression. Affects MAPK3/MAPK1 activity by modulating the activity of MAP2K1 and this modulation depends on phosphorylation of MAP2K1 by PAK1. WNK2 acts by interfering with the activity of PAK1 by controlling the balance of the activity of upstream regulators of PAK1 activity, RHOA and RAC1, which display reciprocal activity. This is Serine/threonine-protein kinase WNK2 from Homo sapiens (Human).